Here is a 142-residue protein sequence, read N- to C-terminus: Transcriptional regulator MraZ (142 aa).

2 consecutive SpoVT-AbrB domains span residues 5 to 47 (THTP…PTET) and 76 to 119 (ASDT…DATE).

This sequence belongs to the MraZ family. As to quaternary structure, forms oligomers.

The protein resides in the cytoplasm. It is found in the nucleoid. The chain is Transcriptional regulator MraZ from Cutibacterium acnes (strain DSM 16379 / KPA171202) (Propionibacterium acnes).